The chain runs to 341 residues: Glucokinase (341 aa).

Position 18–23 (18–23 (GDIGGT)) interacts with ATP.

The protein belongs to the bacterial glucokinase family.

It is found in the cytoplasm. It catalyses the reaction D-glucose + ATP = D-glucose 6-phosphate + ADP + H(+). The protein is Glucokinase of Rhizobium leguminosarum bv. trifolii (strain WSM2304).